A 917-amino-acid polypeptide reads, in one-letter code: Ion channel POLLUX (917 aa).

Residues 1 to 154 form a disordered region; it reads MIPLPVAAAN…SSSPVARPQH (154 aa). Over residues 7–19 the composition is skewed to low complexity; that stretch reads AAANSNSNSNSNS. Polar residues predominate over residues 78 to 89; it reads HQWNYPSFLGTT. Residues 119–136 are compositionally biased toward low complexity; the sequence is KTNTNTNTNTNTNTNTNT. A run of 4 helical transmembrane segments spans residues 160–180, 230–250, 290–310, and 342–362; these read PPIF…SSYL, LYIV…LDYL, LALL…LYAV, and VVSV…LGLV. 2 consecutive RCK N-terminal domains span residues 383–524 and 643–792; these read RNHI…ETVV and PEKI…DKSI. The stretch at 413 to 435 forms a coiled coil; the sequence is VIVVLAEKEKEEMEMDITKLEFD.

The protein belongs to the castor/pollux (TC 1.A.1.23) family. As to quaternary structure, homooligomer. Mainly expressed in nodules. Also detected in infected and uninfected roots, leaves, seed pods, and flower buds.

The protein resides in the nucleus membrane. In terms of biological role, ion channel with permeability for potassium. Involved in perinuclear calcium spiking but not in cytosolic calcium influx. Required for early signal transduction events leading to endosymbiosis. Acts early in a signal transduction chain leading from the perception of Nod factor to the activation of calcium spiking. Also involved in fungal entry into root epidermal cells during the establishment of the arbuscular mycorrhizal symbiosis. In Lotus japonicus (Lotus corniculatus var. japonicus), this protein is Ion channel POLLUX (POLLUX).